Consider the following 89-residue polypeptide: Cell division topological specificity factor (89 aa).

Belongs to the MinE family.

Functionally, prevents the cell division inhibition by proteins MinC and MinD at internal division sites while permitting inhibition at polar sites. This ensures cell division at the proper site by restricting the formation of a division septum at the midpoint of the long axis of the cell. The sequence is that of Cell division topological specificity factor from Klebsiella pneumoniae subsp. pneumoniae (strain ATCC 700721 / MGH 78578).